The sequence spans 428 residues: YTH domain-containing protein ECT1 (428 aa).

The YTH domain occupies 245–382; it reads AKFFVIKSYS…EHGTKIIKIF (138 aa). Residues 251-253, Asp-257, 267-268, Asn-300, Trp-324, Trp-329, and Trp-337 each bind RNA; these read KSY and WS.

As to quaternary structure, interacts (via C-terminus) with CIPK1. In terms of tissue distribution, expressed in root apex, shoot apex, lateral root primordia, stamens, carpels and trichomes.

The protein localises to the nucleus. It is found in the cytoplasm. In terms of biological role, specifically recognizes and binds N6-methyladenosine (m6A)-containing RNAs, and regulates mRNA stability. M6A is a modification present at internal sites of mRNAs and some non-coding RNAs and plays a role in mRNA stability and processing. In Arabidopsis thaliana (Mouse-ear cress), this protein is YTH domain-containing protein ECT1.